The primary structure comprises 538 residues: Cytochrome P450 monooxygenase flvC (538 aa).

A helical transmembrane segment spans residues 17–37 (TVLIAGLLVYWVGSAIFLAVL). C478 lines the heme pocket.

The protein belongs to the cytochrome P450 family. The cofactor is heme.

The protein localises to the membrane. The enzyme catalyses pre-flavunoidine + reduced [NADPH--hemoprotein reductase] + O2 = 10-hydroxy-pre-flavunoidine + oxidized [NADPH--hemoprotein reductase] + H2O + H(+). It participates in secondary metabolite biosynthesis; terpenoid biosynthesis. Functionally, cytochrome P450 monooxygenase; part of the gene cluster that mediates the biosynthesis of flavunoidine, an alkaloidal terpenoid with a tetracyclic cage-like core connected to dimethylcadaverine via a C-N bond and acylated with 5,5-dimethyl-L-pipecolate. The tetracyclic core is synthesized by the terpene cyclase flvE and the cytochrome P450 monooxygenase flvD. The terpene cyclase flvE catalyzes the cyclization of farnesyl pyrophosphate (FPP) to form (1R,4R,5S)-(+)-acoradiene and the cytochrome P450 monooxygenase flvD is then responsible for oxidative conversion of (1R,4R,5S)-(+)-acoradiene into the tetracyclic cage present in the final product flavunoidine. In parallel, the N-methyltransferase flvH dimethylates L-lysine to give N,N-dimethyl-L-Lysin which is decarboxylated by flvG to afford dimethylcadaverine. The terpene cyclase-like protein flvF is the enzyme that attaches the dimethylcadaverine precusor at the C-7 of the tetracyclic cage to yield pre-flavunoidine. The cytochrome monooxygenase flvC hydroxylates the C-10 position of pre-flavunoidine whereas the NRPS flvI acylates the terpenoid core at the hydroxylated C-10 with dimethylpipecolate to yield final flavunoidine. The bifunctional enzyme flvA and the dehydrogenase flvB are responsible for the synthesis of the dimethylpipecolate precursor. The PLP-dependent lyase domain of flvA might use L-O-acetyl-homoserine and alpha-keto-isovalerate to form an intermediary ketone that can cyclize intramolecularly to yield an imine. The imine can be reduced by flvB to yield the 6-carboxylated pipecolate. The C-terminal alpha-KG-dependent oxygenase domain of flvA is then proposed to catalyze the decarboxylation to yield dimethylpipecolate. The sequence is that of Cytochrome P450 monooxygenase flvC from Aspergillus flavus (strain ATCC 200026 / FGSC A1120 / IAM 13836 / NRRL 3357 / JCM 12722 / SRRC 167).